A 210-amino-acid chain; its full sequence is Ribosomal RNA small subunit methyltransferase G (210 aa).

Residues G76, L81, 127 to 128 (VE), and R142 each bind S-adenosyl-L-methionine.

It belongs to the methyltransferase superfamily. RNA methyltransferase RsmG family.

The protein resides in the cytoplasm. It catalyses the reaction guanosine(527) in 16S rRNA + S-adenosyl-L-methionine = N(7)-methylguanosine(527) in 16S rRNA + S-adenosyl-L-homocysteine. Its function is as follows. Specifically methylates the N7 position of guanine in position 527 of 16S rRNA. This is Ribosomal RNA small subunit methyltransferase G from Aliivibrio fischeri (strain ATCC 700601 / ES114) (Vibrio fischeri).